The sequence spans 38 residues: Photosystem II reaction center protein L (38 aa).

The chain crosses the membrane as a helical span at residues 17 to 37 (SLYWGLLLIFVLAVPFSNYFF).

Belongs to the PsbL family. In terms of assembly, PSII is composed of 1 copy each of membrane proteins PsbA, PsbB, PsbC, PsbD, PsbE, PsbF, PsbH, PsbI, PsbJ, PsbK, PsbL, PsbM, PsbT, PsbX, PsbY, PsbZ, Psb30/Ycf12, at least 3 peripheral proteins of the oxygen-evolving complex and a large number of cofactors. It forms dimeric complexes.

The protein localises to the plastid. The protein resides in the chloroplast thylakoid membrane. One of the components of the core complex of photosystem II (PSII). PSII is a light-driven water:plastoquinone oxidoreductase that uses light energy to abstract electrons from H(2)O, generating O(2) and a proton gradient subsequently used for ATP formation. It consists of a core antenna complex that captures photons, and an electron transfer chain that converts photonic excitation into a charge separation. This subunit is found at the monomer-monomer interface and is required for correct PSII assembly and/or dimerization. The chain is Photosystem II reaction center protein L from Cedrus deodara (Deodar cedar).